Reading from the N-terminus, the 521-residue chain is Cytochrome P450 monooxygenase sdnF (521 aa).

The chain crosses the membrane as a helical span at residues 19 to 39 (YLGLLLSGTVLYTVYKLIIAI). N-linked (GlcNAc...) asparagine glycans are attached at residues N178, N186, N191, N309, and N416. Heme is bound at residue C460.

Belongs to the cytochrome P450 family. Requires heme as cofactor.

The protein resides in the membrane. Its pathway is antibiotic biosynthesis. In terms of biological role, cytochrome P450 monooxygenase; part of the gene cluster that mediates the biosynthesis of sordarin and hypoxysordarin, glycoside antibiotics with a unique tetracyclic diterpene aglycone structure. First, the geranylgeranyl diphosphate synthase sdnC constructs GGDP from farnesyl diphosphate and isopentenyl diphosphate. The diterpene cyclase sdnA then catalyzes the cyclization of GGDP to afford cycloaraneosene. Cycloaraneosene is then hydroxylated four times by the putative cytochrome P450 monooxygenases sdnB, sdnE, sdnF and sdnH to give a hydroxylated cycloaraneosene derivative such as cycloaraneosene-8,9,13,19-tetraol. Although the order of the hydroxylations is unclear, at least C8, C9 and C13 of the cycloaraneosene skeleton are hydroxylated before the sordaricin formation. Dehydration of the 13-hydroxy group of the hydroxylated cycloaraneosene derivative might be catalyzed by an unassigned hypothetical protein such as sdnG and sdnP to construct the cyclopentadiene moiety. The FAD-dependent oxidoreductase sdnN is proposed to catalyze the oxidation at C9 of the hydroxylated cycloaraneosene derivative and also catalyze the Baeyer-Villiger oxidation to give the lactone intermediate. The presumed lactone intermediate would be hydrolyzed to give an acrolein moiety and a carboxylate moiety. Then, [4+2]cycloaddition would occur between the acrolein moiety and the cyclopentadiene moiety to give sordaricin. SdnN might also be involved in the [4+2]cycloaddition after the hypothesized oxidation to accommodate the oxidized product and prompt the [4+2]cycloaddition. GDP-6-deoxy-D-altrose may be biosynthesized from GDP-D-mannose by the putative GDP-mannose-4,6-dehydratase sdnI and the short-chain dehydrogenase sdnK. The glycosyltransferase sdnJ catalyzes the attachment of 6-deoxy-D-altrose onto the 19-hydroxy group of sordaricin to give 4'-O-demethylsordarin. The methyltransferase sdnD would complete the biosynthesis of sordarin. Sordarin can be further modified into hypoxysordarin. The unique acyl chain at the 3'-hydroxy group of hypoxysordarin would be constructed by an iterative type I PKS sdnO and the trans-acting polyketide methyltransferase sdnL. SdnL would be responsible for the introduction of an alpha-methyl group of the polyketide chain. Alternatively, the beta-lactamase-like protein sdnR might be responsible for the cleavage and transfer of the polyketide chain from the PKS sdnO to sordarin. Two putative cytochrome P450 monooxygenases, sdnQ and sdnT, might catalyze the epoxidations of the polyketide chain to complete the biosynthesis of hypoxysordarin. Transcriptional regulators sdnM and sdnS are presumably encoded for the transcriptional regulation of the expression of the sdn gene cluster. The chain is Cytochrome P450 monooxygenase sdnF from Sordaria araneosa (Pleurage araneosa).